Reading from the N-terminus, the 383-residue chain is Acetylornithine deacetylase (383 aa).

His80 serves as a coordination point for Zn(2+). Residue Asp82 is part of the active site. Asp112 lines the Zn(2+) pocket. Glu144 is a catalytic residue. Zn(2+)-binding residues include Glu145, Glu169, and His355.

The protein belongs to the peptidase M20A family. ArgE subfamily. In terms of assembly, homodimer. It depends on Zn(2+) as a cofactor. Co(2+) serves as cofactor. The cofactor is glutathione.

It localises to the cytoplasm. The catalysed reaction is N(2)-acetyl-L-ornithine + H2O = L-ornithine + acetate. The protein operates within amino-acid biosynthesis; L-arginine biosynthesis; L-ornithine from N(2)-acetyl-L-ornithine (linear): step 1/1. Its function is as follows. Catalyzes the hydrolysis of the amide bond of N(2)-acetylated L-amino acids. Cleaves the acetyl group from N-acetyl-L-ornithine to form L-ornithine, an intermediate in L-arginine biosynthesis pathway, and a branchpoint in the synthesis of polyamines. The polypeptide is Acetylornithine deacetylase (Shigella flexneri serotype 5b (strain 8401)).